We begin with the raw amino-acid sequence, 136 residues long: Transcription antitermination protein NusB (136 aa).

Belongs to the NusB family.

In terms of biological role, involved in transcription antitermination. Required for transcription of ribosomal RNA (rRNA) genes. Binds specifically to the boxA antiterminator sequence of the ribosomal RNA (rrn) operons. This chain is Transcription antitermination protein NusB, found in Arthrobacter sp. (strain FB24).